The sequence spans 217 residues: 3-demethoxyubiquinol 3-hydroxylase (217 aa).

E66, E96, H99, E148, E180, and H183 together coordinate Fe cation.

Belongs to the COQ7 family. Requires Fe cation as cofactor.

The protein resides in the cell membrane. The enzyme catalyses a 5-methoxy-2-methyl-3-(all-trans-polyprenyl)benzene-1,4-diol + AH2 + O2 = a 3-demethylubiquinol + A + H2O. The protein operates within cofactor biosynthesis; ubiquinone biosynthesis. Functionally, catalyzes the hydroxylation of 2-nonaprenyl-3-methyl-6-methoxy-1,4-benzoquinol during ubiquinone biosynthesis. The chain is 3-demethoxyubiquinol 3-hydroxylase from Xanthomonas axonopodis pv. citri (strain 306).